Here is a 670-residue protein sequence, read N- to C-terminus: Soluble lamin-associated protein of 75 kDa (670 aa).

Disordered stretches follow at residues 273-301 (PKRPMSGEYGPASVPEYEARTEDNQSSEM) and 314-670 (STSE…AKLT). Serine 350 bears the Phosphoserine mark. Polar residues predominate over residues 358-375 (SQTSLTASINKLESTARP). Residues 378 to 387 (SSEEFLEEEP) are compositionally biased toward acidic residues. Phosphoserine is present on serine 379. Over residues 414-423 (EKQDGEKESE) the composition is skewed to basic and acidic residues. The segment covering 442–453 (TEEEDSTSEVLD) has biased composition (acidic residues). Serine 449 carries the phosphoserine modification. The segment covering 460-470 (PFNSSEDSTNL) has biased composition (polar residues). Composition is skewed to basic and acidic residues over residues 479 to 494 (KPPEVDAPDKTPRIPD) and 504 to 514 (SDEKGHMEEKL). Position 515 is a phosphoserine (serine 515). 2 stretches are compositionally biased toward polar residues: residues 558–569 (ENLSPNTTSSLE) and 579–591 (PQETSTALPQSSL). Phosphoserine is present on residues serine 615, serine 618, and serine 635. Over residues 651 to 670 (NLRRKAKGHKGPAKKKAKLT) the composition is skewed to basic residues.

The protein belongs to the FAM169 family.

Its subcellular location is the nucleus envelope. It is found in the nucleus inner membrane. This is Soluble lamin-associated protein of 75 kDa (FAM169A) from Homo sapiens (Human).